A 183-amino-acid polypeptide reads, in one-letter code: Translation initiation factor IF-3 (183 aa).

The protein belongs to the IF-3 family. Monomer.

The protein resides in the cytoplasm. IF-3 binds to the 30S ribosomal subunit and shifts the equilibrium between 70S ribosomes and their 50S and 30S subunits in favor of the free subunits, thus enhancing the availability of 30S subunits on which protein synthesis initiation begins. This chain is Translation initiation factor IF-3, found in Pseudomonas putida (strain W619).